The chain runs to 400 residues: Argininosuccinate synthase (400 aa).

An ATP-binding site is contributed by 9 to 17; the sequence is AYSGGLDTS. Tyrosine 87 is a binding site for L-citrulline. ATP is bound at residue glycine 117. L-aspartate contacts are provided by threonine 119, asparagine 123, and aspartate 124. An L-citrulline-binding site is contributed by asparagine 123. Positions 127, 176, 185, 261, and 273 each coordinate L-citrulline.

It belongs to the argininosuccinate synthase family. Type 1 subfamily. In terms of assembly, homotetramer.

Its subcellular location is the cytoplasm. It carries out the reaction L-citrulline + L-aspartate + ATP = 2-(N(omega)-L-arginino)succinate + AMP + diphosphate + H(+). The protein operates within amino-acid biosynthesis; L-arginine biosynthesis; L-arginine from L-ornithine and carbamoyl phosphate: step 2/3. The protein is Argininosuccinate synthase of Chlorobium luteolum (strain DSM 273 / BCRC 81028 / 2530) (Pelodictyon luteolum).